Here is a 200-residue protein sequence, read N- to C-terminus: uncharacterized protein (200 aa).

Residues 1–24 form the signal peptide; that stretch reads MAIDKLPLLLFLSILLCLNRPVLS. N-linked (GlcNAc...) asparagine glycosylation is found at asparagine 44, asparagine 72, asparagine 99, asparagine 124, and asparagine 135. Serine 174 is lipidated: GPI-anchor amidated serine. Residues 175-200 constitute a propeptide, removed in mature form; that stretch reads NGFTFGIGLVSYLVIFMYSSFCFFLF.

It belongs to the UPF0277 family.

Its subcellular location is the cell membrane. This is an uncharacterized protein from Arabidopsis thaliana (Mouse-ear cress).